The chain runs to 150 residues: MRAVIQRVSEASVTVDHKVCAVMRDGLLILLGIENEDNEEDIDWLCRKIINMRIFNDEDEVMNESLKSVDGDAIIVSQFTLHASTKKGNRPSYIKAAKPEVAEPLYLKFISKFQNELGKDVGSGIFGGDMKVSLLNDGPVTIIIDSKEKR.

Residues 138–139 carry the Gly-cisPro motif, important for rejection of L-amino acids motif; that stretch reads GP.

This sequence belongs to the DTD family. As to quaternary structure, homodimer.

It is found in the cytoplasm. The catalysed reaction is glycyl-tRNA(Ala) + H2O = tRNA(Ala) + glycine + H(+). It carries out the reaction a D-aminoacyl-tRNA + H2O = a tRNA + a D-alpha-amino acid + H(+). Its function is as follows. An aminoacyl-tRNA editing enzyme that deacylates mischarged D-aminoacyl-tRNAs. Also deacylates mischarged glycyl-tRNA(Ala), protecting cells against glycine mischarging by AlaRS. Acts via tRNA-based rather than protein-based catalysis; rejects L-amino acids rather than detecting D-amino acids in the active site. By recycling D-aminoacyl-tRNA to D-amino acids and free tRNA molecules, this enzyme counteracts the toxicity associated with the formation of D-aminoacyl-tRNA entities in vivo and helps enforce protein L-homochirality. In Christiangramia forsetii (strain DSM 17595 / CGMCC 1.15422 / KT0803) (Gramella forsetii), this protein is D-aminoacyl-tRNA deacylase.